The following is a 491-amino-acid chain: Probable protein phosphatase 2C 6 (491 aa).

The span at 1–16 shows a compositional bias: basic and acidic residues; it reads MGLCHSKIDKTTRKET. Residues 1–39 are disordered; it reads MGLCHSKIDKTTRKETGATSTATTTVERQSSGRLRRPRD. A compositionally biased stretch (low complexity) spans 17 to 28; it reads GATSTATTTVER. Residues 64–376 enclose the PPM-type phosphatase domain; that stretch reads IACLYTQQGK…DDCAVVCLFL (313 aa). Residues aspartate 100, glycine 101, aspartate 321, and aspartate 367 each contribute to the Mn(2+) site. Residues 391–422 are disordered; sequence VNHSHEESTESVTITSSKDADKKEEASTETNE.

This sequence belongs to the PP2C family. Mg(2+) serves as cofactor. The cofactor is Mn(2+).

It catalyses the reaction O-phospho-L-seryl-[protein] + H2O = L-seryl-[protein] + phosphate. It carries out the reaction O-phospho-L-threonyl-[protein] + H2O = L-threonyl-[protein] + phosphate. In Arabidopsis thaliana (Mouse-ear cress), this protein is Probable protein phosphatase 2C 6.